The primary structure comprises 111 residues: Putative pterin-4-alpha-carbinolamine dehydratase (111 aa).

The protein belongs to the pterin-4-alpha-carbinolamine dehydratase family.

It catalyses the reaction (4aS,6R)-4a-hydroxy-L-erythro-5,6,7,8-tetrahydrobiopterin = (6R)-L-erythro-6,7-dihydrobiopterin + H2O. The polypeptide is Putative pterin-4-alpha-carbinolamine dehydratase (Chlorobaculum tepidum (strain ATCC 49652 / DSM 12025 / NBRC 103806 / TLS) (Chlorobium tepidum)).